The sequence spans 505 residues: Protein DETOXIFICATION 50 (505 aa).

12 helical membrane passes run 46-66, 78-98, 121-141, 155-175, 194-214, 219-239, 275-295, 305-325, 344-364, 380-400, 424-444, and 446-466; these read LVLTGLFLYVRSFVSLSFLGG, AAAFANITGYSLFSGLTMGVE, IILLLVTSLPVTLLWMNMEKI, AHIFLLYSVPDLVAQSFLHPL, IASFLHLPITFFLVSYLGLGI, LSGVVSNFNLVAFLFLYICFF, ISVCLEWWCYEIMILLCGFLL, GILIQITSLVYIFPHSLSLGV, AAIVGLGLSIALGFTAFAFTV, IMKLTAMALPIVGLCELGNCP, AFYAVGIPVGAVLAFWFGFGF, and GLWLGMLAAQITCVIGMMAAT.

This sequence belongs to the multi antimicrobial extrusion (MATE) (TC 2.A.66.1) family. Preferentially expressed in rosette leaves. Detected mainly in the vascular tissues and guard cells. Mostly detected at reproductive stages in young anthers, in mature pollens and during pollen germination on the pistil. Also expressed in developing seeds.

It localises to the cell membrane. The protein resides in the late endosome membrane. Functions as a multidrug and toxin extrusion transporter in the export of abscisic acid (ABA) in guard cells. Plays a role in ABA-mediated growth inhibition and responses to drought conditions. May act as a negative regulator of hypocotyl cell elongation in the light. The chain is Protein DETOXIFICATION 50 from Arabidopsis thaliana (Mouse-ear cress).